Consider the following 359-residue polypeptide: Glycerol-1-phosphate dehydrogenase [NAD(P)+] (359 aa).

NAD(+)-binding positions include 107 to 111 (GRVID) and 129 to 132 (TAAS). D134 is a binding site for substrate. Residue S138 participates in NAD(+) binding. A substrate-binding site is contributed by D181. D181 and H261 together coordinate Zn(2+). Position 265 (H265) interacts with substrate. H277 contacts Zn(2+).

This sequence belongs to the glycerol-1-phosphate dehydrogenase family. Zn(2+) is required as a cofactor.

Its subcellular location is the cytoplasm. The catalysed reaction is sn-glycerol 1-phosphate + NAD(+) = dihydroxyacetone phosphate + NADH + H(+). It carries out the reaction sn-glycerol 1-phosphate + NADP(+) = dihydroxyacetone phosphate + NADPH + H(+). It functions in the pathway membrane lipid metabolism; glycerophospholipid metabolism. Its function is as follows. Catalyzes the NAD(P)H-dependent reduction of dihydroxyacetonephosphate (DHAP or glycerone phosphate) to glycerol 1-phosphate (G1P). The G1P thus generated is used as the glycerophosphate backbone of phospholipids in the cellular membranes of Archaea. This chain is Glycerol-1-phosphate dehydrogenase [NAD(P)+], found in Methanospirillum hungatei JF-1 (strain ATCC 27890 / DSM 864 / NBRC 100397 / JF-1).